Here is a 255-residue protein sequence, read N- to C-terminus: 5-oxoprolinase subunit A (255 aa).

It belongs to the LamB/PxpA family. As to quaternary structure, forms a complex composed of PxpA, PxpB and PxpC.

It catalyses the reaction 5-oxo-L-proline + ATP + 2 H2O = L-glutamate + ADP + phosphate + H(+). Catalyzes the cleavage of 5-oxoproline to form L-glutamate coupled to the hydrolysis of ATP to ADP and inorganic phosphate. The chain is 5-oxoprolinase subunit A from Campylobacter jejuni subsp. jejuni serotype O:2 (strain ATCC 700819 / NCTC 11168).